A 393-amino-acid polypeptide reads, in one-letter code: Trehalose import ATP-binding protein SugC (393 aa).

Residues 4-235 form the ABC transporter domain; that stretch reads IVLDHVNKSY…PANLFVAGFI (232 aa). 37–44 lines the ATP pocket; it reads GPSGCGKT. A Helical C-loop; LSGGQ motif motif is present at residues 135-139; it reads LSGGQ.

Belongs to the ABC transporter superfamily. As to quaternary structure, monomer. Homodimerizes in the presence of ATP. The complex is composed of two ATP-binding proteins (SugC), two transmembrane proteins (SugA and SugB) and a solute-binding protein (LpqY).

The protein localises to the cell inner membrane. It catalyses the reaction alpha,alpha-trehalose(out) + ATP + H2O = alpha,alpha-trehalose(in) + ADP + phosphate + H(+). In terms of biological role, part of the ABC transporter complex LpqY-SugA-SugB-SugC, which is highly specific for uptake of trehalose. Involved in the recycling of extracellular trehalose released from trehalose-containing molecules synthesized by M.tuberculosis. Trehalose uptake is essential for virulence. Responsible for energy coupling to the transport system. The chain is Trehalose import ATP-binding protein SugC (sugC) from Mycobacterium tuberculosis (strain CDC 1551 / Oshkosh).